A 202-amino-acid polypeptide reads, in one-letter code: PXMP2/4 family protein 1 (202 aa).

Helical transmembrane passes span proline 21 to glutamine 41, leucine 54 to phenylalanine 72, lysine 138 to valine 154, and leucine 161 to valine 177.

The protein belongs to the peroxisomal membrane protein PXMP2/4 family.

The protein localises to the membrane. This is PXMP2/4 family protein 1 from Dictyostelium discoideum (Social amoeba).